Here is a 247-residue protein sequence, read N- to C-terminus: CDP-diacylglycerol pyrophosphatase (247 aa).

The chain crosses the membrane as a helical span at residues isoleucine 5 to methionine 22.

Belongs to the Cdh family.

It localises to the cell inner membrane. It catalyses the reaction a CDP-1,2-diacyl-sn-glycerol + H2O = a 1,2-diacyl-sn-glycero-3-phosphate + CMP + 2 H(+). It functions in the pathway phospholipid metabolism; CDP-diacylglycerol degradation; phosphatidate from CDP-diacylglycerol: step 1/1. In Enterobacter sp. (strain 638), this protein is CDP-diacylglycerol pyrophosphatase.